Reading from the N-terminus, the 508-residue chain is Ribonuclease Y (508 aa).

The chain crosses the membrane as a helical span at residues isoleucine 2–isoleucine 22. In terms of domain architecture, KH spans threonine 198–leucine 261. Residues valine 324–alanine 417 enclose the HD domain.

This sequence belongs to the RNase Y family.

The protein resides in the cell membrane. In terms of biological role, endoribonuclease that initiates mRNA decay. This chain is Ribonuclease Y, found in Thermoanaerobacter pseudethanolicus (strain ATCC 33223 / 39E) (Clostridium thermohydrosulfuricum).